Here is a 371-residue protein sequence, read N- to C-terminus: Peptide chain release factor 2 (371 aa).

An N5-methylglutamine modification is found at glutamine 252.

This sequence belongs to the prokaryotic/mitochondrial release factor family. Methylated by PrmC. Methylation increases the termination efficiency of RF2.

Its subcellular location is the cytoplasm. Peptide chain release factor 2 directs the termination of translation in response to the peptide chain termination codons UGA and UAA. In Staphylococcus epidermidis (strain ATCC 35984 / DSM 28319 / BCRC 17069 / CCUG 31568 / BM 3577 / RP62A), this protein is Peptide chain release factor 2.